Consider the following 444-residue polypeptide: Methylenetetrahydrofolate--tRNA-(uracil-5-)-methyltransferase TrmFO (444 aa).

10–15 contributes to the FAD binding site; that stretch reads GAGLAG.

Belongs to the MnmG family. TrmFO subfamily. The cofactor is FAD.

Its subcellular location is the cytoplasm. It catalyses the reaction uridine(54) in tRNA + (6R)-5,10-methylene-5,6,7,8-tetrahydrofolate + NADH + H(+) = 5-methyluridine(54) in tRNA + (6S)-5,6,7,8-tetrahydrofolate + NAD(+). It carries out the reaction uridine(54) in tRNA + (6R)-5,10-methylene-5,6,7,8-tetrahydrofolate + NADPH + H(+) = 5-methyluridine(54) in tRNA + (6S)-5,6,7,8-tetrahydrofolate + NADP(+). Functionally, catalyzes the folate-dependent formation of 5-methyl-uridine at position 54 (M-5-U54) in all tRNAs. This is Methylenetetrahydrofolate--tRNA-(uracil-5-)-methyltransferase TrmFO from Streptococcus pneumoniae serotype 4 (strain ATCC BAA-334 / TIGR4).